A 462-amino-acid chain; its full sequence is Golgi-associated PDZ and coiled-coil motif-containing protein (462 aa).

The stretch at 83–194 forms a coiled coil; that stretch reads KAQSVSQINH…EDEALRGHIA (112 aa). In terms of domain architecture, PDZ spans 288-371; that stretch reads KVLLLKEDHE…EIEFEVVYVA (84 aa). The disordered stretch occupies residues 427–449; it reads TDTHENGDLGTASETPLDDGASK.

As to quaternary structure, homooligomer. Interacts with FZD5. Interacts with FZD8. Interacts with GRID2 and BECN1. Interacts with CSPG5. Interacts with CLCN3. Interacts with STX6. Interacts with CFTR. Interacts with ASIC3. Interacts with GOLGA3. Interacts with NLGN1. Interacts with RHOQ. Interacts with MARCHF2; the interaction leads to CFTR ubiquitination and degradation. May interact with CACNG2. Interacts with CCDC62.

It localises to the cytoplasm. It is found in the golgi apparatus membrane. Its subcellular location is the golgi apparatus. The protein localises to the trans-Golgi network membrane. The protein resides in the synapse. It localises to the postsynaptic density. It is found in the cell projection. Its subcellular location is the dendrite. Functionally, plays a role in intracellular protein trafficking and degradation. May regulate CFTR chloride currents and acid-induced ASIC3 currents by modulating cell surface expression of both channels. May also regulate the intracellular trafficking of the ADR1B receptor. May play a role in autophagy. Together with MARCHF2 mediates the ubiquitination and lysosomal degradation of CFTR. Overexpression results in CFTR intracellular retention and degradation in the lysosomes. The protein is Golgi-associated PDZ and coiled-coil motif-containing protein (GOPC) of Pongo abelii (Sumatran orangutan).